A 110-amino-acid polypeptide reads, in one-letter code: UPF0122 protein SH1678 (110 aa).

This sequence belongs to the UPF0122 family.

Its function is as follows. Might take part in the signal recognition particle (SRP) pathway. This is inferred from the conservation of its genetic proximity to ftsY/ffh. May be a regulatory protein. In Staphylococcus haemolyticus (strain JCSC1435), this protein is UPF0122 protein SH1678.